Here is a 2093-residue protein sequence, read N- to C-terminus: Nuclear-pore anchor (2093 aa).

Coiled coils occupy residues 57–362 (LEQK…TDEL), 439–529 (MILQ…RDVQ), 570–627 (DING…RAEE), and 688–1172 (QEKA…LEAK). The interval 1175 to 1198 (NSAEKNSRSGTISSGSTDSDHLED) is disordered. Positions 1182-1191 (RSGTISSGST) are enriched in low complexity. 2 coiled-coil regions span residues 1208 to 1252 (LRRT…AERA) and 1293 to 1585 (EKCQ…LKHA). 3 disordered regions span residues 1453 to 1489 (YEKEKDELSKQNQSLAKQLEEAKEEAGKRTTTDAVVE), 1525 to 1555 (KKDEELTKERSERKSVEKEVGDSLTKIKKEK), and 1627 to 2093 (SNSQ…PSPP). Over residues 1470 to 1483 (QLEEAKEEAGKRTT) the composition is skewed to basic and acidic residues. The span at 1652–1674 (STMTRVPSSTPLIKSPVATTQQL) shows a compositional bias: polar residues. Basic and acidic residues-rich tracts occupy residues 1710 to 1719 (KPEESPKVDV) and 1729 to 1740 (DEGKQPAAHEPE). Residues 1764-1779 (SEPQQDSLTQGETSSE) show a composition bias toward polar residues. Residues 1789–1808 (KGSESHPDTSEGENLAKEPA) are compositionally biased toward basic and acidic residues. Positions 1818–1849 (TTDGDNEETEAENAEEKTEEYVEAQQDNEADE) form a coiled coil. Acidic residues-rich tracts occupy residues 1821–1830 (GDNEETEAEN) and 1838–1903 (YVEA…EEGT). The segment covering 1921 to 1931 (TLATPTQSPSR) has biased composition (polar residues). The span at 1935–1963 (AMEEAETTIETPVEDDKTDEGGDAAEEAA) shows a compositional bias: acidic residues. Positions 1984–2009 (TSAATTSPVSTAPTTSSTLASAITSS) are enriched in low complexity. A Phosphoserine modification is found at Ser-2022.

In terms of assembly, part of the nuclear pore complex (NPC). The NPC has an eight-fold symmetrical structure comprising a central transport channel and two rings, the cytoplasmic and nuclear rings, to which eight filaments are attached. The cytoplasmic filaments have loose ends, while the nuclear filaments are joined in a distal ring, forming a nuclear basket. NPCs are highly dynamic in configuration and composition, and can be devided in 3 subcomplexes, the NUP62 subcomplex, the NUP107-160 subcomplex and the NUP93 subcomplex, containing approximately 30 different nucleoporin proteins. Interacts with MAD1 and (via N-terminus) with ESD4. In terms of tissue distribution, ubiquitous. Highest expression in the shoot apical region.

It localises to the nucleus envelope. Its subcellular location is the nucleus membrane. The protein localises to the nucleus. It is found in the nuclear pore complex. Functionally, component of the nuclear pore complex. Acts as a docking site for activities required for desumoylation and mRNA export. Required for the proper expression or localization of a subset of miRNAs. Plays a role in meristematic cell division by interacting with spindle assembly checkpoint proteins. The sequence is that of Nuclear-pore anchor from Arabidopsis thaliana (Mouse-ear cress).